We begin with the raw amino-acid sequence, 29 residues long: MDYETDTDTELVTETLVEEVSIDGMCGVY.

This sequence belongs to the mycofactocin precursor peptide family. Post-translationally, the post-translational modifications that lead to mycofactocin involve oxidative decarboxylation of the C-terminal tyrosine residue catalyzed by MftC, introduction of a tyramine-valine cross-link, removal of the modified C-terminal dipeptide by MftE. The released dipeptide then undergoes oxidative deamination by MftD, glycosylation by MftF and methylation by an unknown enzyme.

Functionally, precursor peptide that leads to mycofactocin (MFT) after extensive post-translational modifications by enzymes encoded by adjacent genes. Mycofactocin acts as a redox cofactor of nicotinamide-dependent oxidoreductases encoded in the same locus. The protein is Mycofactocin precursor peptide of Mycobacterium tuberculosis (strain ATCC 25618 / H37Rv).